Consider the following 194-residue polypeptide: ATP-dependent Clp protease proteolytic subunit (194 aa).

Catalysis depends on Ser97, which acts as the Nucleophile. The active site involves His122.

Belongs to the peptidase S14 family. Fourteen ClpP subunits assemble into 2 heptameric rings which stack back to back to give a disk-like structure with a central cavity, resembling the structure of eukaryotic proteasomes.

The protein resides in the cytoplasm. It catalyses the reaction Hydrolysis of proteins to small peptides in the presence of ATP and magnesium. alpha-casein is the usual test substrate. In the absence of ATP, only oligopeptides shorter than five residues are hydrolyzed (such as succinyl-Leu-Tyr-|-NHMec, and Leu-Tyr-Leu-|-Tyr-Trp, in which cleavage of the -Tyr-|-Leu- and -Tyr-|-Trp bonds also occurs).. Its function is as follows. Cleaves peptides in various proteins in a process that requires ATP hydrolysis. Has a chymotrypsin-like activity. Plays a major role in the degradation of misfolded proteins. This chain is ATP-dependent Clp protease proteolytic subunit, found in Lactobacillus delbrueckii subsp. bulgaricus (strain ATCC BAA-365 / Lb-18).